Consider the following 319-residue polypeptide: Acyl-coenzyme A thioesterase 8 (319 aa).

A disordered region spans residues 1 to 20 (MSSPQAPEDGQGCGDRGDPP). Residues D232, S254, and Q304 each act as charge relay system in the active site. A Microbody targeting signal motif is present at residues 317–319 (SKL).

The protein belongs to the C/M/P thioester hydrolase family. As to quaternary structure, homodimer. In terms of assembly, (Microbial infection) Interacts with human immunodeficiency virus (HIV-1) Nef (via middle region); this interaction enhances ACOT8 Acyl-CoA thioesterase activity and occurs in a Nef myristoylation-independent manner. According to a second report, the interaction with HIV-1 Nef occurs in a Nef myristoylation-independent manner but does not enhance ACOT8 Acyl-CoA thioesterase activity. Detected in a T-cell line (at protein level). Ubiquitous.

It is found in the peroxisome matrix. It catalyses the reaction choloyl-CoA + H2O = cholate + CoA + H(+). The catalysed reaction is chenodeoxycholoyl-CoA + H2O = chenodeoxycholate + CoA + H(+). The enzyme catalyses acetyl-CoA + H2O = acetate + CoA + H(+). It carries out the reaction butanoyl-CoA + H2O = butanoate + CoA + H(+). It catalyses the reaction 2-methylpropanoyl-CoA + H2O = 2-methylpropanoate + CoA + H(+). The catalysed reaction is hexanoyl-CoA + H2O = hexanoate + CoA + H(+). The enzyme catalyses octanoyl-CoA + H2O = octanoate + CoA + H(+). It carries out the reaction decanoyl-CoA + H2O = decanoate + CoA + H(+). It catalyses the reaction dodecanoyl-CoA + H2O = dodecanoate + CoA + H(+). The catalysed reaction is tetradecanoyl-CoA + H2O = tetradecanoate + CoA + H(+). The enzyme catalyses hexadecanoyl-CoA + H2O = hexadecanoate + CoA + H(+). It carries out the reaction octadecanoyl-CoA + H2O = octadecanoate + CoA + H(+). It catalyses the reaction malonyl-CoA + H2O = malonate + CoA + H(+). The catalysed reaction is acetoacetyl-CoA + H2O = acetoacetate + CoA + H(+). The enzyme catalyses propanoyl-CoA + H2O = propanoate + CoA + H(+). It carries out the reaction succinyl-CoA + H2O = succinate + CoA + H(+). It catalyses the reaction glutaryl-CoA + H2O = glutarate + CoA + H(+). The catalysed reaction is hexanedioyl-CoA + H2O = hexanedioate + CoA + H(+). The enzyme catalyses octanedioyl-CoA + H2O = octanedioate + CoA + H(+). It carries out the reaction decanedioyl-CoA + H2O = decanedioate + CoA + H(+). It catalyses the reaction dodecanedioyl-CoA + H2O = dodecanedioate + CoA + H(+). The catalysed reaction is (9Z)-tetradecenoyl-CoA + H2O = (9Z)-tetradecenoate + CoA + H(+). The enzyme catalyses (9Z)-hexadecenoyl-CoA + H2O = (9Z)-hexadecenoate + CoA + H(+). It carries out the reaction (9Z)-octadecenoyl-CoA + H2O = (9Z)-octadecenoate + CoA + H(+). It catalyses the reaction (9Z,12Z)-octadecadienoyl-CoA + H2O = (9Z,12Z)-octadecadienoate + CoA + H(+). The catalysed reaction is eicosanoyl-CoA + H2O = eicosanoate + CoA + H(+). The enzyme catalyses (5Z,8Z,11Z,14Z)-eicosatetraenoyl-CoA + H2O = (5Z,8Z,11Z,14Z)-eicosatetraenoate + CoA + H(+). It carries out the reaction 4,8-dimethylnonanoyl-CoA + H2O = 4,8-dimethylnonanoate + CoA + H(+). It catalyses the reaction 2,6-dimethylheptanoyl-CoA + H2O = 2,6-dimethylheptanoate + CoA + H(+). The catalysed reaction is (3S)-3-hydroxy-3-methylglutaryl-CoA + H2O = 3-hydroxy-3-methylglutarate + CoA + H(+). The enzyme catalyses 3alpha,7alpha,12alpha-trihydroxy-5beta-cholestan-26-oyl-CoA + H2O = 3alpha,7alpha,12alpha-trihydroxy-5beta-cholestan-26-oate + CoA + H(+). It carries out the reaction 2-methyloctadecanoyl-CoA + H2O = 2-methyloctadecanoate + CoA + H(+). It catalyses the reaction prostaglandin F2alpha-CoA + H2O = prostaglandin F2alpha + CoA + H(+). The protein operates within lipid metabolism; fatty acid metabolism. With respect to regulation, inhibited by CoASH (IC(50)=10-15 uM). Also inhibited by cysteine-reactive agents. Functionally, catalyzes the hydrolysis of acyl-CoAs into free fatty acids and coenzyme A (CoASH), regulating their respective intracellular levels. Displays no strong substrate specificity with respect to the carboxylic acid moiety of Acyl-CoAs. Hydrolyzes medium length (C2 to C20) straight-chain, saturated and unsaturated acyl-CoAS but is inactive towards substrates with longer aliphatic chains. Moreover, it catalyzes the hydrolysis of CoA esters of bile acids, such as choloyl-CoA and chenodeoxycholoyl-CoA and competes with bile acid CoA:amino acid N-acyltransferase (BAAT). Is also able to hydrolyze CoA esters of dicarboxylic acids. It is involved in the metabolic regulation of peroxisome proliferation. In terms of biological role, (Microbial infection) May mediate Nef-induced down-regulation of CD4 cell-surface expression. The sequence is that of Acyl-coenzyme A thioesterase 8 (ACOT8) from Homo sapiens (Human).